Here is a 299-residue protein sequence, read N- to C-terminus: Acidic endochitinase Pun g 14, amyloplastic (299 aa).

The N-terminal 26 residues, 1 to 26 (MAKTLPFSRALLLSLSILLVARAISA), are a transit peptide targeting the amyloplast. Residues 27–299 (GDIAIYWGQN…TYSTTIKDQV (273 aa)) enclose the GH18 domain. 2 disulfide bridges follow: cysteine 46–cysteine 93 and cysteine 76–cysteine 83. Glutamate 153 functions as the Proton donor in the catalytic mechanism. Cysteine 185 and cysteine 216 form a disulfide bridge.

The protein belongs to the glycosyl hydrolase 18 family. Chitinase class III subfamily. In terms of assembly, monomer. As to expression, highly expressed in seeds and to a lesser extent in the skin of the pomegranate fruit (at protein level). Not expressed in leaves or flesh of the fruit (at protein level).

It is found in the plastid. The protein resides in the amyloplast. The enzyme catalyses Random endo-hydrolysis of N-acetyl-beta-D-glucosaminide (1-&gt;4)-beta-linkages in chitin and chitodextrins.. Activity is not affected by addition of 10 mM Ca(2+) or removal of Ca(2+). In terms of biological role, hydrolyzes chitin. Probable calcium storage protein of the seeds. Binds calcium ions with high capacity and low affinity. Involved in seed germination. This is Acidic endochitinase Pun g 14, amyloplastic from Punica granatum (Pomegranate).